A 273-amino-acid chain; its full sequence is Putative pyruvate, phosphate dikinase regulatory protein (273 aa).

149 to 156 is a binding site for ADP; sequence GPSRTSKT.

The protein belongs to the pyruvate, phosphate/water dikinase regulatory protein family. PDRP subfamily.

The enzyme catalyses N(tele)-phospho-L-histidyl/L-threonyl-[pyruvate, phosphate dikinase] + ADP = N(tele)-phospho-L-histidyl/O-phospho-L-threonyl-[pyruvate, phosphate dikinase] + AMP + H(+). The catalysed reaction is N(tele)-phospho-L-histidyl/O-phospho-L-threonyl-[pyruvate, phosphate dikinase] + phosphate + H(+) = N(tele)-phospho-L-histidyl/L-threonyl-[pyruvate, phosphate dikinase] + diphosphate. Functionally, bifunctional serine/threonine kinase and phosphorylase involved in the regulation of the pyruvate, phosphate dikinase (PPDK) by catalyzing its phosphorylation/dephosphorylation. In Rickettsia felis (strain ATCC VR-1525 / URRWXCal2) (Rickettsia azadi), this protein is Putative pyruvate, phosphate dikinase regulatory protein.